Consider the following 293-residue polypeptide: Shikimate dehydrogenase (NADP(+)) (293 aa).

Shikimate contacts are provided by residues 20–22 (SLT) and T72. Catalysis depends on K76, which acts as the Proton acceptor. N97 and D112 together coordinate shikimate. NADP(+) is bound by residues 136 to 140 (GAGGA) and I230. Residue Y232 participates in shikimate binding. Residue G253 participates in NADP(+) binding.

It belongs to the shikimate dehydrogenase family. As to quaternary structure, homodimer.

The catalysed reaction is shikimate + NADP(+) = 3-dehydroshikimate + NADPH + H(+). It participates in metabolic intermediate biosynthesis; chorismate biosynthesis; chorismate from D-erythrose 4-phosphate and phosphoenolpyruvate: step 4/7. In terms of biological role, involved in the biosynthesis of the chorismate, which leads to the biosynthesis of aromatic amino acids. Catalyzes the reversible NADPH linked reduction of 3-dehydroshikimate (DHSA) to yield shikimate (SA). The polypeptide is Shikimate dehydrogenase (NADP(+)) (Arthrobacter sp. (strain FB24)).